A 2544-amino-acid polypeptide reads, in one-letter code: DNA polymerase theta (2544 aa).

Basic residues predominate over residues 1-13 (MSLPRRSRKRRRS). The disordered stretch occupies residues 1 to 57 (MSLPRRSRKRRRSSSGSDTFSGDGDSFVSPQLRCGPVLSPPPGLGRGRRLTGTGTNK). Over residues 14–29 (SSGSDTFSGDGDSFVS) the composition is skewed to low complexity. ATP is bound by residues Gln95 and 114-121 (APTSAGKT). The region spanning 101–285 (LGHVLEGKNL…WLNAELYHTD (185 aa)) is the Helicase ATP-binding domain. A helicase activity region spans residues 101-551 (LGHVLEGKNL…STSQDMQTYA (451 aa)). A DEAH box motif is present at residues 215–218 (DELH). Residues 320-551 (GDEDHIVSLC…STSQDMQTYA (232 aa)) enclose the Helicase C-terminal domain. The tract at residues 844-890 (DEEEEAAEERRSMRTIWVTGKGLSAREAAALIVEEAKMILQQDLIEM) is interaction with RAD51. Positions 896–955 (PKSPLSSSTHSRTSTSEVKEHTFKSQTKSSHKRLASMGRNSIRASGSNDKPSPDAERGID) are disordered. Residues 898–911 (SPLSSSTHSRTSTS) are compositionally biased toward low complexity. Residues 933–945 (GRNSIRASGSNDK) are compositionally biased toward polar residues. Positions 946–955 (PSPDAERGID) are enriched in basic and acidic residues. Residue Lys983 is modified to N6-acetyllysine. Residues 1022-1034 (LSFSSEQVNNTLP) are compositionally biased toward polar residues. Disordered regions lie at residues 1022–1058 (LSFS…GMHR) and 1128–1167 (VGHP…ESQL). Positions 1128–1139 (VGHPAAGSSPAA) are enriched in low complexity. A compositionally biased stretch (basic and acidic residues) spans 1140 to 1155 (ARDRRGLAARETEKGN). Ser1265 carries the phosphoserine modification. Disordered regions lie at residues 1266-1288 (GVQG…SNPA) and 1331-1353 (QNKC…DHVD). Phosphoserine occurs at positions 1438, 1442, 1444, and 1449. Residues 1478–1501 (FSNPPHPQEDPVMTPTVSEPQGTQ) are disordered. Residues 1492–1501 (PTVSEPQGTQ) show a composition bias toward polar residues. Ser1511, Ser1519, Ser1585, and Ser1592 each carry phosphoserine. The interval 1557-1591 (ECPQGKLVRGDQNEGSPKPKLTETNQDNSFTWSGA) is disordered. Polar residues predominate over residues 1578 to 1591 (TETNQDNSFTWSGA). 2 stretches are compositionally biased toward basic and acidic residues: residues 1606 to 1616 (VSSPRENEKPK) and 1628 to 1638 (NSKESHEREEI). A disordered region spans residues 1606 to 1697 (VSSPRENEKP…GLIPPTPVPA (92 aa)). Positions 1641–1652 (DLGTVQRTSVFP) are enriched in polar residues. Over residues 1656-1667 (VKNRTEGLESKA) the composition is skewed to basic and acidic residues. Thr1710 carries the phosphothreonine modification. Residues 2052-2538 (AECESQKHVM…KVKIGASWGE (487 aa)) are DNA polymerase activity. Loop stretches follow at residues 2097 to 2132 (KLPP…GRQF) and 2212 to 2276 (EIKM…VPFP). The segment covering 2104–2117 (MKTQGSKKTLGSTR) has biased composition (polar residues). Positions 2104-2124 (MKTQGSKKTLGSTRRGNESGR) are disordered. Catalysis depends on Asp2284, which acts as the For DNA polymerase activity. 2 residues coordinate Mg(2+): Asp2284 and Tyr2285. Residues 2445–2489 (QLETFRSTFKSHGHRESMLQNDRTGLLPKRKLKGMFCPMRGGFFI) are loop 3. Residue Asp2494 coordinates Mg(2+).

This sequence belongs to the DNA polymerase type-A family. As to quaternary structure, homomultimer; forms homodimers and homotetramers. Interacts with RAD51. Interacts with ORC2 and ORC4. Interacts with RHNO1; interaction takes place during mitosis and promotes POLQ recruitment to DNA damage sites. Interacts (when phosphorylated) with TOPBP1 (via BRCT domains 7 and 8); promoting POLQ recruitment to DNA damage sites. Mg(2+) serves as cofactor. Phosphorylated by PLK1; promoting interaction with TOPBP1 and recruitment to DNA damage sites.

The protein localises to the nucleus. Its subcellular location is the chromosome. It catalyses the reaction DNA(n) + a 2'-deoxyribonucleoside 5'-triphosphate = DNA(n+1) + diphosphate. The enzyme catalyses ATP + H2O = ADP + phosphate + H(+). Low-fidelity DNA polymerase with a helicase activity that promotes microhomology-mediated end-joining (MMEJ), an alternative non-homologous end-joining (NHEJ) machinery required to repair double-strand breaks in DNA during mitosis. MMEJ is an error-prone repair pathway that produces deletions of sequences from the strand being repaired and promotes genomic rearrangements, such as telomere fusions, some of them leading to cellular transformation. MMEJ is required during mitosis to repair persistent double-strand breaks that originate in S-phase. Although error-prone, MMEJ protects against chromosomal instability and tumorigenesis. The polymerase acts by binding directly the 2 ends of resected double-strand breaks, allowing microhomologous sequences in the overhangs to form base pairs. It then extends each strand from the base-paired region using the opposing overhang as a template. Requires partially resected DNA containing 2 to 6 base pairs of microhomology to perform MMEJ. The polymerase lacks proofreading activity and is highly promiscuous: unlike most polymerases, promotes extension of ssDNA and partial ssDNA (pssDNA) substrates. When the ends of a break do not contain terminal microhomology must identify embedded complementary sequences through a scanning step. Also acts as a DNA helicase, promoting dissociation of the replication protein A complex (RPA/RP-A), composed of RPA1, RPA2 and RPA3, from resected double-strand breaks to allow their annealing and subsequent joining by MMEJ. Removal of RPA/RP-A complex proteins prevents RAD51 accumulation at resected ends, thereby inhibiting homology-recombination repair (HR) pathway. Also shows RNA-directed DNA polymerase activity to mediate DNA repair in vitro; however this activity needs additional evidence in vivo. May also have lyase activity. Involved in somatic hypermutation of immunoglobulin genes, a process that requires the activity of DNA polymerases to ultimately introduce mutations at both A/T and C/G base pairs. However, POLQ does not play a major role in somatic hypermutation. POLQ-mediated end joining activity is involved in random integration of exogenous DNA hampers. The chain is DNA polymerase theta from Mus musculus (Mouse).